The primary structure comprises 352 residues: NAD(P)H pyrophosphatase NUDT13, mitochondrial (352 aa).

A mitochondrion-targeting transit peptide spans 1 to 20; that stretch reads MSLYCRTFFRRKSFGCYRLL. In terms of domain architecture, Nudix hydrolase spans 196 to 323; that stretch reads PQMAPVVITL…SLALQPSEAS (128 aa). A Nudix box motif is present at residues 216-240; sequence RQSSFPKGLYSALAGFCDIGESVEE.

It belongs to the Nudix hydrolase family. Mg(2+) is required as a cofactor. Mn(2+) serves as cofactor.

The protein localises to the mitochondrion. The catalysed reaction is NADH + H2O = reduced beta-nicotinamide D-ribonucleotide + AMP + 2 H(+). It carries out the reaction NAD(+) + H2O = beta-nicotinamide D-ribonucleotide + AMP + 2 H(+). It catalyses the reaction NADPH + H2O = reduced beta-nicotinamide D-ribonucleotide + adenosine 2',5'-bisphosphate + 2 H(+). NAD(P)H pyrophosphatase that hydrolyzes NADH into NMNH and AMP, and NADPH into NMNH and 2',5'-ADP. Has a marked preference for the reduced pyridine nucleotides. Does not show activity toward NAD-capped RNAs; the NAD-cap is an atypical cap present at the 5'-end of some RNAs. This chain is NAD(P)H pyrophosphatase NUDT13, mitochondrial, found in Mus musculus (Mouse).